The following is a 603-amino-acid chain: Chaperone protein DnaK (603 aa).

Position 175 is a phosphothreonine; by autocatalysis (T175). A compositionally biased stretch (low complexity) spans 573–586; that stretch reads AQQAQQQNPDNQNN. The tract at residues 573–603 is disordered; sequence AQQAQQQNPDNQNNNKDDVTEATVTDDSTKK. Over residues 594-603 the composition is skewed to polar residues; that stretch reads ATVTDDSTKK.

The protein belongs to the heat shock protein 70 family.

In terms of biological role, acts as a chaperone. This is Chaperone protein DnaK from Ureaplasma parvum serovar 3 (strain ATCC 27815 / 27 / NCTC 11736).